The chain runs to 122 residues: Large ribosomal subunit protein uL14c (122 aa).

The protein belongs to the universal ribosomal protein uL14 family. As to quaternary structure, part of the 50S ribosomal subunit.

It is found in the plastid. Its subcellular location is the chloroplast. Its function is as follows. Binds to 23S rRNA. In Lemna minor (Common duckweed), this protein is Large ribosomal subunit protein uL14c.